We begin with the raw amino-acid sequence, 432 residues long: Adenosylhomocysteinase (432 aa).

3 residues coordinate substrate: T56, D131, and E156. 157-159 (TTT) is an NAD(+) binding site. Substrate is bound by residues K186 and D190. NAD(+)-binding positions include 222–227 (GDVGKG), E243, N248, 299–301 (IGH), N346, H353, K426, 426–430 (KPDHY), and Y430.

It belongs to the adenosylhomocysteinase family. As to quaternary structure, interacts with AhcyL1; the interaction may negatively regulate Ahcy catalytic activity. NAD(+) serves as cofactor.

The catalysed reaction is S-adenosyl-L-homocysteine + H2O = L-homocysteine + adenosine. Its pathway is amino-acid biosynthesis; L-homocysteine biosynthesis; L-homocysteine from S-adenosyl-L-homocysteine: step 1/1. Functionally, adenosylhomocysteine is a competitive inhibitor of S-adenosyl-L-methionine-dependent methyl transferase reactions; therefore adenosylhomocysteinase may play a key role in the control of methylations via regulation of the intracellular concentration of adenosylhomocysteine. This is Adenosylhomocysteinase from Drosophila melanogaster (Fruit fly).